Reading from the N-terminus, the 226-residue chain is NADH-ubiquinone oxidoreductase chain 6 (226 aa).

Helical transmembrane passes span 2 to 22, 28 to 48, 56 to 76, 90 to 110, and 169 to 189; these read STLGLLLILLGIIITCTFVIL, IYSILNLIVIYGCYASILLTV, IYILVNVGAIAVLFLFIVMMI, YNIYMFVGFIGLIGIMGILIT, and IWFIMACIILLIGMVGVIYIT.

It belongs to the complex I subunit 6 family.

Its subcellular location is the mitochondrion membrane. The catalysed reaction is a ubiquinone + NADH + 5 H(+)(in) = a ubiquinol + NAD(+) + 4 H(+)(out). Functionally, core subunit of the mitochondrial membrane respiratory chain NADH dehydrogenase (Complex I) that is believed to belong to the minimal assembly required for catalysis. Complex I functions in the transfer of electrons from NADH to the respiratory chain. The immediate electron acceptor for the enzyme is believed to be ubiquinone. The polypeptide is NADH-ubiquinone oxidoreductase chain 6 (nad6) (Dictyostelium citrinum (Slime mold)).